Reading from the N-terminus, the 572-residue chain is Solute carrier family 22 member 16 (572 aa).

The chain crosses the membrane as a helical span at residues 21-41; that stretch reads IFLYFICAFQNISCGIHYLAS. The N-linked (GlcNAc...) asparagine glycan is linked to Asn-57. Helical transmembrane passes span 156 to 176, 183 to 203, 208 to 228, 244 to 264, and 268 to 288; these read LIQPTFMFGVLLGAVIFGYLS, LVLWASSTGVFLFGIAAAFTF, FIVARFLLAISGSGYLVVVFV, IHLHSFFAFGTMVVALTGYFV, and WIYQIVLSSVTVPFVLCCWML. Asn-315 carries an N-linked (GlcNAc...) asparagine glycan. 6 consecutive transmembrane segments (helical) span residues 359–379, 389–409, 416–436, 441–461, 476–496, and 503–523; these read TLILWLIWFTGCLGFYTFSLN, LNLFLMGVVEIPAYVLVCLGM, NILIFSLLSSAVTSGVIMVIP, VWLVVASMAGKFFIGAAFGLI, LAVGSGSTVGRVGSIVAPLCI, and IFMPQLLVGTLALVSGVLTFL. N-linked (GlcNAc...) asparagine glycosylation occurs at Asn-559.

It belongs to the major facilitator (TC 2.A.1) superfamily. Organic cation transporter (TC 2.A.1.19) family.

It localises to the cell membrane. The catalysed reaction is (R)-carnitine(in) = (R)-carnitine(out). The enzyme catalyses spermidine(in) = spermidine(out). Facilitative organic cation transporter that mediates the transport of carnitine as well as the polyamine spermidine. Mediates the partially Na(+)-dependent bidirectional transport of carnitine. May mediate L-carnitine secretion from testis epididymal epithelium into the lumen which is involved in the maturation of spermatozoa. The polypeptide is Solute carrier family 22 member 16 (SLC22A16) (Bos taurus (Bovine)).